Here is a 227-residue protein sequence, read N- to C-terminus: Guanylate kinase (227 aa).

The 179-residue stretch at 21 to 199 folds into the Guanylate kinase-like domain; sequence GNLFMVVAPS…ALAELECIVA (179 aa). ATP is bound at residue 28–35; it reads APSGAGKS.

The protein belongs to the guanylate kinase family.

Its subcellular location is the cytoplasm. It carries out the reaction GMP + ATP = GDP + ADP. Functionally, essential for recycling GMP and indirectly, cGMP. This Burkholderia orbicola (strain AU 1054) protein is Guanylate kinase.